Reading from the N-terminus, the 1328-residue chain is Protein turtle homolog B (1328 aa).

Residues 1 to 20 (MIWYVATLIASVISTRGLVA) form the signal peptide. The Extracellular portion of the chain corresponds to 21–722 (QVAHGLREEP…DLTDDGLARP (702 aa)). 5 Ig-like domains span residues 30-115 (PEFV…ECKV), 139-226 (PTFT…LLVQ), 228-320 (PPFI…AYLT), 324-415 (PARV…ARLV), and 420-504 (PYFT…THLT). 2 disulfide bridges follow: Cys-45–Cys-113 and Cys-161–Cys-208. Asn-241 and Asn-258 each carry an N-linked (GlcNAc...) asparagine glycan. Cystine bridges form between Cys-250-Cys-303, Cys-346-Cys-397, and Cys-442-Cys-488. 2 consecutive Fibronectin type-III domains span residues 512 to 604 (APGS…TLAF) and 614 to 708 (LVTP…STDI). N-linked (GlcNAc...) asparagine glycosylation is present at Asn-624. A helical transmembrane segment spans residues 723–743 (VLAGIVATICFLAAAILFSTL). The Cytoplasmic portion of the chain corresponds to 744 to 1328 (AACFVNKQRK…EPPTTLPTSG (585 aa)). 3 disordered regions span residues 758–817 (RKKD…EKEL), 914–1040 (PMSS…PEPW), and 1107–1328 (SPGR…PTSG). Residues Ser-775, Ser-783, and Ser-794 each carry the phosphoserine modification. The segment covering 990–1001 (SPLSSVMSSPPL) has biased composition (low complexity). Polar residues-rich tracts occupy residues 1018-1033 (ENAS…TPTG), 1129-1141 (LVSQ…TSQG), and 1199-1214 (SRLS…SRTG). Residue Arg-1136 is modified to Omega-N-methylarginine. Residues Ser-1207 and Ser-1215 each carry the phosphoserine modification. Residues 1246–1273 (SFSRKSTPSSTGSPSQSSRSGSPSYRPT) are compositionally biased toward low complexity. Pro residues-rich tracts occupy residues 1284–1295 (PSPPPGPAPPAP) and 1318–1328 (PEPPTTLPTSG).

It belongs to the immunoglobulin superfamily. Turtle family. Found in a complex with MAGI2 and NLGN2, where it interacts with MAGI2 (via PDZ 5 and PDZ 6 domains). In terms of processing, N-glycosylated and sialylated. Not significantly O-glycosylated. In terms of tissue distribution, detected primarily in brain, including cortex, hippocampus, cerebellum and striatum. Largely restricted to inhibitory GABAergic interneurons (at protein level).

The protein resides in the postsynaptic cell membrane. Its subcellular location is the postsynaptic density. Transmembrane protein which is abundantly expressed in interneurons, where it may regulate inhibitory synapse development. May mediate homophilic cell adhesion. This chain is Protein turtle homolog B, found in Rattus norvegicus (Rat).